The chain runs to 85 residues: Large ribosomal subunit protein bL27 (85 aa).

The segment at 1–22 (MAHKKAGGSTRNGRDSESKRLG) is disordered.

Belongs to the bacterial ribosomal protein bL27 family.

This is Large ribosomal subunit protein bL27 from Aliivibrio fischeri (strain ATCC 700601 / ES114) (Vibrio fischeri).